The primary structure comprises 355 residues: Protein-glutamate methylesterase/protein-glutamine glutaminase 3 (355 aa).

In terms of domain architecture, Response regulatory spans 5 to 122; the sequence is KVLIVDDSAV…KQFLEESRVR (118 aa). Position 56 is a 4-aspartylphosphate (Asp56). The CheB-type methylesterase domain maps to 165 to 355; sequence IQTTEKVVVV…IAREVLRLCG (191 aa). Active-site residues include Ser177, His203, and Asp299.

Belongs to the CheB family. In terms of processing, phosphorylated by CheA. Phosphorylation of the N-terminal regulatory domain activates the methylesterase activity.

The protein localises to the cytoplasm. The catalysed reaction is [protein]-L-glutamate 5-O-methyl ester + H2O = L-glutamyl-[protein] + methanol + H(+). It catalyses the reaction L-glutaminyl-[protein] + H2O = L-glutamyl-[protein] + NH4(+). Involved in chemotaxis. Part of a chemotaxis signal transduction system that modulates chemotaxis in response to various stimuli. Catalyzes the demethylation of specific methylglutamate residues introduced into the chemoreceptors (methyl-accepting chemotaxis proteins or MCP) by CheR. Also mediates the irreversible deamidation of specific glutamine residues to glutamic acid. The chain is Protein-glutamate methylesterase/protein-glutamine glutaminase 3 from Geobacter metallireducens (strain ATCC 53774 / DSM 7210 / GS-15).